The following is a 183-amino-acid chain: Peptide deformylase (183 aa).

Positions 110 and 153 each coordinate Fe cation. E154 is a catalytic residue. Residue H157 participates in Fe cation binding.

Belongs to the polypeptide deformylase family. Requires Fe(2+) as cofactor.

It catalyses the reaction N-terminal N-formyl-L-methionyl-[peptide] + H2O = N-terminal L-methionyl-[peptide] + formate. Removes the formyl group from the N-terminal Met of newly synthesized proteins. Requires at least a dipeptide for an efficient rate of reaction. N-terminal L-methionine is a prerequisite for activity but the enzyme has broad specificity at other positions. The sequence is that of Peptide deformylase from Shouchella clausii (strain KSM-K16) (Alkalihalobacillus clausii).